A 372-amino-acid polypeptide reads, in one-letter code: NADH-quinone oxidoreductase subunit H (372 aa).

The next 8 membrane-spanning stretches (helical) occupy residues 34–54, 106–126, 139–159, 178–198, 217–237, 269–289, 313–333, and 352–372; these read LPLG…LYAL, FLFV…FAVL, VGLF…LAAG, IVSY…MAGT, FFLF…IASL, VIFL…AIVF, VWGA…QMWL, and VLTP…IYVP.

It belongs to the complex I subunit 1 family. NDH-1 is composed of 14 different subunits. Subunits NuoA, H, J, K, L, M, N constitute the membrane sector of the complex.

The protein resides in the cell inner membrane. The enzyme catalyses a quinone + NADH + 5 H(+)(in) = a quinol + NAD(+) + 4 H(+)(out). Functionally, NDH-1 shuttles electrons from NADH, via FMN and iron-sulfur (Fe-S) centers, to quinones in the respiratory chain. The immediate electron acceptor for the enzyme in this species is believed to be ubiquinone. Couples the redox reaction to proton translocation (for every two electrons transferred, four hydrogen ions are translocated across the cytoplasmic membrane), and thus conserves the redox energy in a proton gradient. This subunit may bind ubiquinone. This Chlorobium luteolum (strain DSM 273 / BCRC 81028 / 2530) (Pelodictyon luteolum) protein is NADH-quinone oxidoreductase subunit H.